A 65-amino-acid polypeptide reads, in one-letter code: Myosin-11 (65 aa).

The region spanning 1 to 65 (RSGKLDAFLV…NWQWWRLFTK (65 aa)) is the Myosin motor domain.

This sequence belongs to the TRAFAC class myosin-kinesin ATPase superfamily. Myosin family. In terms of assembly, muscle myosin is a hexameric protein that consists of 2 heavy chain subunits (MHC), 2 alkali light chain subunits (MLC) and 2 regulatory light chain subunits (MLC-2).

Its subcellular location is the melanosome. It localises to the cytoplasm. The protein resides in the myofibril. Functionally, muscle contraction. This is Myosin-11 (MYH11) from Sus scrofa (Pig).